A 478-amino-acid polypeptide reads, in one-letter code: Putative response regulator NtrX-like (478 aa).

One can recognise a Response regulatory domain in the interval 5-121 (DVLIVDDEED…KLVILLKRAC (117 aa)). D54 is modified (4-aspartylphosphate). The region spanning 143 to 372 (LVGNSTITLK…LRNVVEWTLI (230 aa)) is the Sigma-54 factor interaction domain. Residues 171–178 (GKVGSGKE) and 235–244 (ANNGTLYIDE) each bind ATP.

Its function is as follows. Member of the two-component regulatory system RBE_0312/RBE_0470. This Rickettsia bellii (strain RML369-C) protein is Putative response regulator NtrX-like.